The following is a 498-amino-acid chain: MEFSIKSGSPEKQRSACVVVGVFESRKMTLPAELLDKASGGYISDIVRRGDMEGKAGSTLLLHSVPSTLCDRILLVGLGKEKDFREKEFASAIRTAVKVLNETGAFDASIFLTELPVRKRSIAWRVRQTAMIALDATYKFDQFKSKKEEIRRPLRKLTISVERRNELAPAEEALAQGLAIAEGMAMAKTLGNLPPNICHPTYLAEQAQAMAEEFKLGCEILDRAEMEKLGMHSLLSVARGSHQPPKLIVLTYKGARASEKPIVLVGKGVTFDTGGISLKPGAEMDEMKYDMCGAASVLGTMQAVARMALPINLTVVVPATENMPGGNATRPGDIVTSMSGQTIEILNTDAEGRLILCDALTYAERFEPDTVIDVATLTGACVVALGSIATGLFANKDALARDLLDAGEDANDRGWHMPLWDDYQELLKSPFADMANIGGRWGGAISAACFLSRFTKKFDWAHLDIAGTAWKSGADKGATGRPVPMLAYYLLQRAGKLN.

Mn(2+) contacts are provided by K267 and D272. K279 is a catalytic residue. Residues D290, D349, and E351 each contribute to the Mn(2+) site. The active site involves R353.

This sequence belongs to the peptidase M17 family. It depends on Mn(2+) as a cofactor.

It is found in the cytoplasm. The catalysed reaction is Release of an N-terminal amino acid, Xaa-|-Yaa-, in which Xaa is preferably Leu, but may be other amino acids including Pro although not Arg or Lys, and Yaa may be Pro. Amino acid amides and methyl esters are also readily hydrolyzed, but rates on arylamides are exceedingly low.. The enzyme catalyses Release of an N-terminal amino acid, preferentially leucine, but not glutamic or aspartic acids.. In terms of biological role, presumably involved in the processing and regular turnover of intracellular proteins. Catalyzes the removal of unsubstituted N-terminal amino acids from various peptides. The protein is Probable cytosol aminopeptidase of Dechloromonas aromatica (strain RCB).